The following is a 206-amino-acid chain: Somatotropin (206 aa).

The N-terminal stretch at 1-22 (MAGLHFFPALLALLMASLQTHQ) is a signal peptide. Disulfide bonds link C75–C179 and C196–C204.

This sequence belongs to the somatotropin/prolactin family.

The protein localises to the secreted. In terms of biological role, growth hormone plays an important role in growth control and is involved in the regulation of several anabolic processes. Implicated as an osmoregulatory substance important for seawater adaptation. This chain is Somatotropin (gh), found in Protopterus annectens (African lungfish).